A 315-amino-acid polypeptide reads, in one-letter code: Olfactory receptor 56A3 (315 aa).

Over 1–29 (MTTHRNDTLSTEASDFLLNCFVRSPSWQH) the chain is Extracellular. Asparagine 6 carries an N-linked (GlcNAc...) asparagine glycan. A helical membrane pass occupies residues 30–50 (WLSLPLSLLFLLAVGANTTLL). Topologically, residues 51 to 58 (MTIWLEAS) are cytoplasmic. Residues 59 to 79 (LHQPLYYLLSLLSLLDIVLCL) traverse the membrane as a helical segment. The Extracellular segment spans residues 80-103 (TVIPKVLTIFWFDLRPISFPACFL). A disulfide bond links cysteine 101 and cysteine 193. The chain crosses the membrane as a helical span at residues 104–124 (QMYIMNCFLAMESCTFMVMAY). Over 125–143 (DRYVAICHPLRYPSIITDH) the chain is Cytoplasmic. A helical transmembrane segment spans residues 144–164 (FVVKAAMFILTRNVLMTLPIP). Residues 165-200 (ILSAQLRYCGRNVIENCICANMSVSRLSCDDVTINH) are Extracellular-facing. The N-linked (GlcNAc...) asparagine glycan is linked to asparagine 185. A helical membrane pass occupies residues 201–221 (LYQFAGGWTLLGSDLILIFLS). Topologically, residues 222–241 (YTFILRAVLRLKAEGAVAKA) are cytoplasmic. A helical membrane pass occupies residues 242 to 262 (LSTCGSHFMLILFFSTILLVF). Residues 263–277 (VLTHVAKKKVSPDVP) are Extracellular-facing. Residues 278-298 (VLLNVLHHVIPAALNPIIYGV) traverse the membrane as a helical segment. Over 299 to 315 (RTQEIKQGMQRLLKKGC) the chain is Cytoplasmic.

This sequence belongs to the G-protein coupled receptor 1 family.

It is found in the cell membrane. In terms of biological role, odorant receptor. The chain is Olfactory receptor 56A3 (OR56A3) from Homo sapiens (Human).